The primary structure comprises 308 residues: Transaldolase (308 aa).

The active-site Schiff-base intermediate with substrate is the K125.

It belongs to the transaldolase family. Type 1 subfamily. As to quaternary structure, homodimer.

It localises to the cytoplasm. The enzyme catalyses D-sedoheptulose 7-phosphate + D-glyceraldehyde 3-phosphate = D-erythrose 4-phosphate + beta-D-fructose 6-phosphate. It participates in carbohydrate degradation; pentose phosphate pathway; D-glyceraldehyde 3-phosphate and beta-D-fructose 6-phosphate from D-ribose 5-phosphate and D-xylulose 5-phosphate (non-oxidative stage): step 2/3. Transaldolase is important for the balance of metabolites in the pentose-phosphate pathway. The sequence is that of Transaldolase from Pseudomonas putida (strain ATCC 47054 / DSM 6125 / CFBP 8728 / NCIMB 11950 / KT2440).